The chain runs to 472 residues: Glutamate--tRNA ligase (472 aa).

Positions 10–20 (PSPTGYLHVGG) match the 'HIGH' region motif. Zn(2+)-binding residues include cysteine 99, cysteine 101, cysteine 126, and histidine 128. The short motif at 238–242 (KLSKR) is the 'KMSKS' region element. Lysine 241 contributes to the ATP binding site.

It belongs to the class-I aminoacyl-tRNA synthetase family. Glutamate--tRNA ligase type 1 subfamily. In terms of assembly, monomer. Zn(2+) serves as cofactor.

It localises to the cytoplasm. It catalyses the reaction tRNA(Glu) + L-glutamate + ATP = L-glutamyl-tRNA(Glu) + AMP + diphosphate. Its function is as follows. Catalyzes the attachment of glutamate to tRNA(Glu) in a two-step reaction: glutamate is first activated by ATP to form Glu-AMP and then transferred to the acceptor end of tRNA(Glu). The polypeptide is Glutamate--tRNA ligase (Proteus mirabilis (strain HI4320)).